The sequence spans 149 residues: Small ribosomal subunit protein uS19w (149 aa).

Belongs to the universal ribosomal protein uS19 family.

The protein resides in the cytoplasm. In Arabidopsis thaliana (Mouse-ear cress), this protein is Small ribosomal subunit protein uS19w (RPS15E).